We begin with the raw amino-acid sequence, 678 residues long: Alpha-L-arabinofuranosidase 1 (678 aa).

The first 33 residues, 1 to 33 (MDMESWKLLRSVCVLSFLLGSCFVYQSLRVVDA), serve as a signal peptide directing secretion. One can recognise a CBM-cenC domain in the interval 152–239 (NIEEGKKYKV…WIDQVSAMPV (88 aa)). Asn181, Asn362, Asn523, and Asn555 each carry an N-linked (GlcNAc...) asparagine glycan.

The protein belongs to the glycosyl hydrolase 51 family. As to expression, expressed in roots, leaves, flowers, stems, siliques and seedlings. Observed in zones of cell proliferation, the vascular system and floral abscission zones. Expressed in the guard cells in stems, in xylem vessels and parenchyma cells surrounding the vessels, in the cambium and in the phloem, but not in the secondary xylem.

It localises to the secreted. It is found in the extracellular space. The protein localises to the extracellular matrix. It catalyses the reaction Hydrolysis of terminal non-reducing alpha-L-arabinofuranoside residues in alpha-L-arabinosides.. Its function is as follows. May be involved in the coordinated dissolution of the cell wall matrix during abscission and in the secondary cell wall formation in xylem vessels. Prefers arabinoxylan, but may also use pectic arabinans as substrates. This is Alpha-L-arabinofuranosidase 1 (ASD1) from Arabidopsis thaliana (Mouse-ear cress).